The chain runs to 367 residues: MALSDLLELTLLLLLPLLERLSAEDCPCSEASLCRPIRHHRDFEVFVFDVGQKTWKSYDWSQITTVAVFGKYDSELMCYAHSKGARVVLKGDVALKDIINPTFRASWIAQKVALAKAQHMDGINIDIEQEVDCSSPEYEALTALVRETTEGFHREIEGSQVTFDVAWSPKGIDKRCYNYTGIADACDFLFVMSYDEQSQIWSECIAAANAPYNQTLTGYGDYLRMGISPRKLVMGIPWYGYDYICLNLSKDDVCAIAKVPFRGAPCSDAAGHQVPYRVIMKQVNSSVSGSQWNQDQQAPYYNYKDPTGRLHQVWYDNPRSISLKAAFVKHYGLRGIGMWNANCLDYSDDALAREQTEEMWGALRPRL.

Positions 1 to 23 (MALSDLLELTLLLLLPLLERLSA) are cleaved as a signal peptide. Residues 24–367 (EDCPCSEASL…EMWGALRPRL (344 aa)) form the GH18 domain. Glutamate 128 acts as the Proton donor in catalysis. Residues asparagine 178, asparagine 213, asparagine 247, and asparagine 284 are each glycosylated (N-linked (GlcNAc...) asparagine).

This sequence belongs to the glycosyl hydrolase 18 family.

The protein localises to the lysosome. Involved in the degradation of asparagine-linked glycoproteins. Hydrolyze of N-acetyl-beta-D-glucosamine (1-4)N-acetylglucosamine chitobiose core from the reducing end of the bond, it requires prior cleavage by glycosylasparaginase. This is Di-N-acetylchitobiase (Ctbs) from Rattus norvegicus (Rat).